A 154-amino-acid chain; its full sequence is Xanthine-guanine phosphoribosyltransferase (154 aa).

Residues 38 to 39 (RG), Lys71, and 90 to 98 (DDLVDTGGT) contribute to the 5-phospho-alpha-D-ribose 1-diphosphate site. Lys71 lines the GMP pocket. Asp91 lines the Mg(2+) pocket. Residues Asp94 and Ile137 each coordinate guanine. Xanthine is bound by residues Asp94 and Ile137. Residues 94–98 (DTGGT) and 136–137 (WI) each bind GMP.

The protein belongs to the purine/pyrimidine phosphoribosyltransferase family. XGPT subfamily. As to quaternary structure, homotetramer. Mg(2+) is required as a cofactor.

The protein localises to the cell inner membrane. The catalysed reaction is GMP + diphosphate = guanine + 5-phospho-alpha-D-ribose 1-diphosphate. It catalyses the reaction XMP + diphosphate = xanthine + 5-phospho-alpha-D-ribose 1-diphosphate. It carries out the reaction IMP + diphosphate = hypoxanthine + 5-phospho-alpha-D-ribose 1-diphosphate. It functions in the pathway purine metabolism; GMP biosynthesis via salvage pathway; GMP from guanine: step 1/1. It participates in purine metabolism; XMP biosynthesis via salvage pathway; XMP from xanthine: step 1/1. In terms of biological role, purine salvage pathway enzyme that catalyzes the transfer of the ribosyl-5-phosphate group from 5-phospho-alpha-D-ribose 1-diphosphate (PRPP) to the N9 position of the 6-oxopurines guanine and xanthine to form the corresponding ribonucleotides GMP (guanosine 5'-monophosphate) and XMP (xanthosine 5'-monophosphate), with the release of PPi. To a lesser extent, also acts on hypoxanthine. This is Xanthine-guanine phosphoribosyltransferase from Buchnera aphidicola subsp. Schizaphis graminum (strain Sg).